A 184-amino-acid chain; its full sequence is Photosystem I assembly protein Ycf4 (184 aa).

The next 2 helical transmembrane spans lie at 22-42 (FCWA…GISS) and 57-77 (IVFF…LFIS).

Belongs to the Ycf4 family.

The protein localises to the plastid. Its subcellular location is the chloroplast thylakoid membrane. Its function is as follows. Seems to be required for the assembly of the photosystem I complex. The protein is Photosystem I assembly protein Ycf4 of Coffea arabica (Arabian coffee).